The sequence spans 312 residues: Small ribosomal subunit protein uS2 (312 aa).

The tract at residues 232 to 312 (RASGAAERDE…AAPEGEAAAE (81 aa)) is disordered. Basic and acidic residues predominate over residues 245–284 (REGRDDRGDRRDDRRGPRRGDRRDDRRDRGGDRGGDRRGP). Low complexity predominate over residues 291 to 312 (AAPVASAEPAAEAAPEGEAAAE).

The protein belongs to the universal ribosomal protein uS2 family.

The chain is Small ribosomal subunit protein uS2 from Myxococcus xanthus (strain DK1622).